We begin with the raw amino-acid sequence, 155 residues long: MSRRGTAEEKTAKSDPIYRNRLVNMLINRILKHGKKSLAYQILYRAMKKIQQKTETNPLSVLRQAIRRVTPDIAVKARRASGSTHPVPIEIGSTQGRALAIRWLLGASRKRPGRNMAFKLSSELVDATKGRGGAIRKREETHRMAEANRAFAHFR.

This sequence belongs to the universal ribosomal protein uS7 family. As to quaternary structure, part of the 30S ribosomal subunit.

It is found in the plastid. It localises to the chloroplast. Its function is as follows. One of the primary rRNA binding proteins, it binds directly to 16S rRNA where it nucleates assembly of the head domain of the 30S subunit. This Oenothera argillicola (Appalachian evening primrose) protein is Small ribosomal subunit protein uS7cz/uS7cy (rps7-A).